The following is a 429-amino-acid chain: Probable proton-coupled zinc antiporter SLC30A4 (429 aa).

The Cytoplasmic portion of the chain corresponds to 1 to 113 (MAGSGAWKRL…LLKQRKVKTR (113 aa)). The helical transmembrane segment at 114-134 (LTIAAVLYLLFMIGELVGGYI) threads the bilayer. The Lumenal portion of the chain corresponds to 135-143 (ANSLAIMTD). Residues 144-164 (ALHMLTDLSAIILTLLALWLS) form a helical membrane-spanning segment. Residues histidine 146 and aspartate 150 each coordinate Zn(2+). The Cytoplasmic segment spans residues 165–178 (SKSPTKRFTFGFHR). Residues 179 to 199 (LEVLSAMISVLLVYILMGFLL) traverse the membrane as a helical segment. The Lumenal segment spans residues 200-216 (YEAVQRTIHMKYEINGD). A helical membrane pass occupies residues 217 to 237 (IMLITAAIGVAVNVIMGFLLN). Residues 238–274 (QSGHHHAHSHSLPSNSPTTGPRCGHNQGQDSLAVRAA) lie on the Cytoplasmic side of the membrane. Residues 240-264 (GHHHAHSHSLPSNSPTTGPRCGHNQ) are zinc binding. Residues 275 to 295 (FVHALGDLVQSVGVLIAAYII) traverse the membrane as a helical segment. Zn(2+) is bound by residues histidine 277 and aspartate 281. Residues 296–310 (RFKPEYRIADPICTY) lie on the Lumenal side of the membrane. The chain crosses the membrane as a helical span at residues 311-331 (VFSLLVAFTTFRIIWDTVVII). The Cytoplasmic segment spans residues 332-429 (LEGVPSHLNV…TCANCQSSSS (98 aa)).

Belongs to the cation diffusion facilitator (CDF) transporter (TC 2.A.4) family. SLC30A subfamily. As to quaternary structure, homodimerization could regulate efficiency for zinc transport. Interacts with TMEM163.

It is found in the endosome membrane. The protein localises to the late endosome membrane. The protein resides in the lysosome membrane. The catalysed reaction is Zn(2+)(in) + 2 H(+)(out) = Zn(2+)(out) + 2 H(+)(in). Probable proton-coupled zinc ion antiporter mediating zinc import from cytoplasm potentially into the endocytic compartment. Controls zinc deposition in milk. This chain is Probable proton-coupled zinc antiporter SLC30A4, found in Bos taurus (Bovine).